A 759-amino-acid polypeptide reads, in one-letter code: 5-methyltetrahydropteroyltriglutamate--homocysteine methyltransferase (759 aa).

Residues 17–20 and Lys-116 contribute to the 5-methyltetrahydropteroyltri-L-glutamate site; that span reads RELK. Residues 430-432 and Glu-483 each bind L-homocysteine; that span reads IGS. L-methionine is bound by residues 430–432 and Glu-483; that span reads IGS. Residues 514–515 and Trp-560 each bind 5-methyltetrahydropteroyltri-L-glutamate; that span reads RC. Asp-598 lines the L-homocysteine pocket. Asp-598 serves as a coordination point for L-methionine. Glu-604 lines the 5-methyltetrahydropteroyltri-L-glutamate pocket. The Zn(2+) site is built by His-641, Cys-643, and Glu-665. His-694 functions as the Proton donor in the catalytic mechanism. A Zn(2+)-binding site is contributed by Cys-726.

It belongs to the vitamin-B12 independent methionine synthase family. Requires Zn(2+) as cofactor.

The catalysed reaction is 5-methyltetrahydropteroyltri-L-glutamate + L-homocysteine = tetrahydropteroyltri-L-glutamate + L-methionine. It participates in amino-acid biosynthesis; L-methionine biosynthesis via de novo pathway; L-methionine from L-homocysteine (MetE route): step 1/1. Functionally, catalyzes the transfer of a methyl group from 5-methyltetrahydrofolate to homocysteine resulting in methionine formation. The protein is 5-methyltetrahydropteroyltriglutamate--homocysteine methyltransferase of Lactococcus lactis subsp. lactis (strain IL1403) (Streptococcus lactis).